We begin with the raw amino-acid sequence, 307 residues long: Dihydroorotate dehydrogenase A (fumarate) (307 aa).

FMN is bound by residues serine 21 and 46–47 (KT). Substrate is bound by residues lysine 46, 70–74 (NSVGL), and asparagine 130. Asparagine 130 contacts FMN. Cysteine 133 (nucleophile) is an active-site residue. Positions 168 and 194 each coordinate FMN. Substrate is bound at residue 195–196 (NT). Residues glycine 220, 246-247 (GG), and 268-269 (GS) each bind FMN.

This sequence belongs to the dihydroorotate dehydrogenase family. Type 1 subfamily. Homodimer. FMN serves as cofactor.

Its subcellular location is the cytoplasm. It carries out the reaction (S)-dihydroorotate + fumarate = orotate + succinate. The protein operates within pyrimidine metabolism; UMP biosynthesis via de novo pathway. Functionally, catalyzes the conversion of dihydroorotate to orotate with fumarate as the electron acceptor. This Lactobacillus helveticus (strain DPC 4571) protein is Dihydroorotate dehydrogenase A (fumarate) (pyrD).